Here is a 393-residue protein sequence, read N- to C-terminus: Formate-dependent phosphoribosylglycinamide formyltransferase (393 aa).

Residues 22-23 (EL) and Glu-82 contribute to the N(1)-(5-phospho-beta-D-ribosyl)glycinamide site. Residues Arg-114, Lys-155, 160-165 (SSGHGQ), 195-198 (EGFV), and Glu-203 each bind ATP. The ATP-grasp domain maps to 119–308 (RLAAEELGLP…QFALHARAVL (190 aa)). Glu-267 and Glu-279 together coordinate Mg(2+). N(1)-(5-phospho-beta-D-ribosyl)glycinamide is bound by residues Asp-286, Lys-356, and 363–364 (RR).

This sequence belongs to the PurK/PurT family. In terms of assembly, homodimer.

The enzyme catalyses N(1)-(5-phospho-beta-D-ribosyl)glycinamide + formate + ATP = N(2)-formyl-N(1)-(5-phospho-beta-D-ribosyl)glycinamide + ADP + phosphate + H(+). It participates in purine metabolism; IMP biosynthesis via de novo pathway; N(2)-formyl-N(1)-(5-phospho-D-ribosyl)glycinamide from N(1)-(5-phospho-D-ribosyl)glycinamide (formate route): step 1/1. Functionally, involved in the de novo purine biosynthesis. Catalyzes the transfer of formate to 5-phospho-ribosyl-glycinamide (GAR), producing 5-phospho-ribosyl-N-formylglycinamide (FGAR). Formate is provided by PurU via hydrolysis of 10-formyl-tetrahydrofolate. The sequence is that of Formate-dependent phosphoribosylglycinamide formyltransferase from Parabacteroides distasonis (strain ATCC 8503 / DSM 20701 / CIP 104284 / JCM 5825 / NCTC 11152).